A 308-amino-acid chain; its full sequence is MQPSGHRLRDIEHHPLLTDNDNYDSASSSSSEADMADRVWFIRDGCGMVCAVMTWLLVVYADFVVTFVMLLPSKDFWYSVVNGVLFNCLAVLALSSHLRTMLTDPGAVPKGNATKEYMESLQLKPGEVIYKCPKCCCIKPERAHHCSICKRCIRKMDHHCPWVNNCVGEKNQRFFVLFTMYIALSSIHALILCGLQFISCVRGQWTECSDFSPPITVILLVFLCLEGLLFFTFTAVMFGTQIHSICNDETEIERLKSEKPTWERRLRWEGMKSVFGGPPSLLWMNPFVGFRFRRLQMRTRKGGPEFSV.

Residues 1-50 are Cytoplasmic-facing; sequence MQPSGHRLRDIEHHPLLTDNDNYDSASSSSSEADMADRVWFIRDGCGMVC. A helical membrane pass occupies residues 51-71; it reads AVMTWLLVVYADFVVTFVMLL. Over 72–75 the chain is Lumenal; sequence PSKD. A helical membrane pass occupies residues 76–96; sequence FWYSVVNGVLFNCLAVLALSS. The Cytoplasmic segment spans residues 97–173; it reads HLRTMLTDPG…NNCVGEKNQR (77 aa). The region spanning 130 to 180 is the DHHC domain; it reads YKCPKCCCIKPERAHHCSICKRCIRKMDHHCPWVNNCVGEKNQRFFVLFTM. The active-site S-palmitoyl cysteine intermediate is C160. Residues 174-194 form a helical membrane-spanning segment; it reads FFVLFTMYIALSSIHALILCG. At 195–217 the chain is on the lumenal side; the sequence is LQFISCVRGQWTECSDFSPPITV. A helical transmembrane segment spans residues 218 to 238; sequence ILLVFLCLEGLLFFTFTAVMF. Over 239–308 the chain is Cytoplasmic; it reads GTQIHSICND…TRKGGPEFSV (70 aa).

This sequence belongs to the DHHC palmitoyltransferase family. In terms of assembly, homooligomers. Heterooligomers with ZDHHC3. Autopalmitoylated. In terms of tissue distribution, widely expressed. Present in Sertoli cells (at protein level).

The protein resides in the golgi apparatus membrane. It catalyses the reaction L-cysteinyl-[protein] + hexadecanoyl-CoA = S-hexadecanoyl-L-cysteinyl-[protein] + CoA. The catalysed reaction is L-cysteinyl-[protein] + tetradecanoyl-CoA = S-tetradecanoyl-L-cysteinyl-[protein] + CoA. It carries out the reaction L-cysteinyl-[protein] + octadecanoyl-CoA = S-octadecanoyl-L-cysteinyl-[protein] + CoA. Functionally, golgi-localized palmitoyltransferase that catalyzes the addition of palmitate onto various protein substrates and therefore functions in several unrelated biological processes. Has no stringent fatty acid selectivity and in addition to palmitate can also transfer onto target proteins myristate from tetradecanoyl-CoA and stearate from octadecanoyl-CoA. Palmitoylates sex steroid hormone receptors, including ESR1, PGR and AR, thereby regulating their targeting to the plasma membrane and their function in rapid intracellular signaling upon binding of sex hormones. Palmitoylates GNAQ, a heterotrimeric G protein, regulating its dynamic localization at the plasma membrane and is thereby involved in GNAQ-dependent G protein-coupled receptor signaling pathways. Also functions in ligand-induced cell death by regulating the FAS signaling pathway through the palmitoylation and stabilization of the receptor at the plasma membrane. In epithelial cells, palmitoylates SCRIB and regulates its localization to the plasma membrane, regulating indirectly cell polarity and differentiation. Also palmitoylates JAM3 and promotes its expression at tight junctions and regulates its function in cell migration. Palmitoylates the glucose transporter GLUT4/SLC2A4 and controls the insulin-dependent translocation of GLUT4 to the plasma membrane. In brain, could also palmitoylate SNAP25 and DLG4/PSD95. Could also palmitoylate DNAJC5 and regulate its localization to the Golgi membrane. Could also palmitoylate NCDN. May play a role in follicle stimulation hormone (FSH) activation of testicular Sertoli cells. Activates pyroptosis by catalyzing palmitoylation of gasdermin-D (GSDMD). The chain is Palmitoyltransferase ZDHHC7 from Rattus norvegicus (Rat).